A 184-amino-acid polypeptide reads, in one-letter code: MDLPGNDFDSNDFDAVDLWGADGAEGWTADPIIGVGSAATPDTGPDLDNAHGQAETDTEQEIALFTVTNPPRTVSVSTLMDGRIDHVELSARVAWMSESQLASEILVIADLARQKAQSAQYAFILDRMSQQVDADEHRVALLRKTVGETWGLPSPEEAAAAEAEVFATRYSDDCPAPDDESDPW.

The segment at 33–56 (IGVGSAATPDTGPDLDNAHGQAET) is disordered.

The protein localises to the secreted. Required for ESX-1 function. Required for the maintenance of adequate cellular levels of both EspA and EspC. Facilitates EsxA secretion. The polypeptide is ESX-1 secretion-associated protein EspD (Mycobacterium tuberculosis (strain CDC 1551 / Oshkosh)).